The sequence spans 91 residues: Small ribosomal subunit protein bS20 (91 aa).

Disordered stretches follow at residues 1-26 (MALR…RSRK) and 67-91 (HKNA…AQQS).

Belongs to the bacterial ribosomal protein bS20 family.

Its function is as follows. Binds directly to 16S ribosomal RNA. This is Small ribosomal subunit protein bS20 from Deinococcus deserti (strain DSM 17065 / CIP 109153 / LMG 22923 / VCD115).